Consider the following 270-residue polypeptide: Formamidopyrimidine-DNA glycosylase (270 aa).

Proline 2 functions as the Schiff-base intermediate with DNA in the catalytic mechanism. Glutamate 3 acts as the Proton donor in catalysis. Lysine 57 (proton donor; for beta-elimination activity) is an active-site residue. 3 residues coordinate DNA: histidine 90, arginine 109, and lysine 151. The segment at 236-270 (RVYGRKGQACEVCESEIQSVTLGQRNTFFCEQCQK) adopts an FPG-type zinc-finger fold. Arginine 260 (proton donor; for delta-elimination activity) is an active-site residue.

Belongs to the FPG family. As to quaternary structure, monomer. The cofactor is Zn(2+).

The catalysed reaction is Hydrolysis of DNA containing ring-opened 7-methylguanine residues, releasing 2,6-diamino-4-hydroxy-5-(N-methyl)formamidopyrimidine.. It carries out the reaction 2'-deoxyribonucleotide-(2'-deoxyribose 5'-phosphate)-2'-deoxyribonucleotide-DNA = a 3'-end 2'-deoxyribonucleotide-(2,3-dehydro-2,3-deoxyribose 5'-phosphate)-DNA + a 5'-end 5'-phospho-2'-deoxyribonucleoside-DNA + H(+). In terms of biological role, involved in base excision repair of DNA damaged by oxidation or by mutagenic agents. Acts as a DNA glycosylase that recognizes and removes damaged bases. Has a preference for oxidized purines, such as 7,8-dihydro-8-oxoguanine (8-oxoG). Has AP (apurinic/apyrimidinic) lyase activity and introduces nicks in the DNA strand. Cleaves the DNA backbone by beta-delta elimination to generate a single-strand break at the site of the removed base with both 3'- and 5'-phosphates. This Pseudoalteromonas atlantica (strain T6c / ATCC BAA-1087) protein is Formamidopyrimidine-DNA glycosylase.